The primary structure comprises 280 residues: MNNSKIISKVLLSLSLFTVGASAFVIQDELMQKNHAKAEVSAEEIKKHEEKWNKYYGVNAFNLPKELFSKVDEKDRQKYPYNTIGNVFVKGQTSATGVLIGKNTVLTNRHIAKFANGDPSKVSFRPSINTDDNGNTETPYGEYEVKEILQEPFGAGVDLALIRLKPDQNGVSLGDKISPAKIGTSNDLKDGDKLELIGYPFDHKVNQMHRSEIELTTLSRGLRYYGFTVPGNSGSGIFNSNGELVGIHSSKVSHLDREHQINYGVGIGNYVKRIINEKNE.

The N-terminal stretch at 1–38 (MNNSKIISKVLLSLSLFTVGASAFVIQDELMQKNHAKA) is a signal peptide. Catalysis depends on charge relay system residues histidine 110, aspartate 158, and serine 233.

The protein belongs to the peptidase S1B family. It depends on Ca(2+) as a cofactor.

In terms of biological role, has serine protease-like properties and binds to the skin protein profilaggrin. Cleaves substrates after acidic residues. Exfoliative toxins cause impetigous diseases commonly referred as staphylococcal scalded skin syndrome (SSSS). The protein is Exfoliative toxin A (eta) of Staphylococcus aureus.